The primary structure comprises 384 residues: Glutamate 5-kinase (384 aa).

Residue Lys24 coordinates ATP. Positions 64, 149, and 161 each coordinate substrate. Residues 181–182 (TD) and 223–229 (TGGMRTK) each bind ATP. The 83-residue stretch at 288–370 (PGAILIDAGA…RDIQTLLGYT (83 aa)) folds into the PUA domain.

It belongs to the glutamate 5-kinase family.

It is found in the cytoplasm. The catalysed reaction is L-glutamate + ATP = L-glutamyl 5-phosphate + ADP. Its pathway is amino-acid biosynthesis; L-proline biosynthesis; L-glutamate 5-semialdehyde from L-glutamate: step 1/2. In terms of biological role, catalyzes the transfer of a phosphate group to glutamate to form L-glutamate 5-phosphate. The polypeptide is Glutamate 5-kinase (Xylella fastidiosa (strain M23)).